Here is a 256-residue protein sequence, read N- to C-terminus: Alcohol dehydrogenase (256 aa).

12-35 (FVAGLGGIGLDTSREIVKAGPKNL) serves as a coordination point for NAD(+). S140 contacts substrate. Catalysis depends on Y153, which acts as the Proton acceptor.

Belongs to the short-chain dehydrogenases/reductases (SDR) family. In terms of assembly, homodimer.

The catalysed reaction is a primary alcohol + NAD(+) = an aldehyde + NADH + H(+). It catalyses the reaction a secondary alcohol + NAD(+) = a ketone + NADH + H(+). The protein is Alcohol dehydrogenase (Adh) of Zaprionus tuberculatus (Vinegar fly).